Here is a 171-residue protein sequence, read N- to C-terminus: MARPAPWWWLRPLAALALALALVRVPSARAGQMPRPAERGPPVRLFTEEELARYSGEEEDQPIYLAVKGVVFDVTSGKEFYGRGAPYNALAGKDSSRGVAKMSLDPADLTHDISGLTAKELEALDDIFSKVYKAKYPIVGYTARRILNEDGSPNLDFKPEDQPHFDIKDEF.

The N-terminal stretch at 1–30 (MARPAPWWWLRPLAALALALALVRVPSARA) is a signal peptide. The region spanning 43-128 (VRLFTEEELA…KELEALDDIF (86 aa)) is the Cytochrome b5 heme-binding domain. K135 carries the N6-acetyllysine modification. The segment at 151–171 (GSPNLDFKPEDQPHFDIKDEF) is disordered. Basic and acidic residues predominate over residues 157–171 (FKPEDQPHFDIKDEF).

This sequence belongs to the cytochrome b5 family. MAPR subfamily. As to quaternary structure, interacts with PINK1 and PARK7.

It is found in the secreted. The protein localises to the extracellular space. It localises to the mitochondrion. Its subcellular location is the endoplasmic reticulum. Its function is as follows. Acts as a neurotrophic factor in postnatal mature neurons enhancing neuronal survival. Promotes cell proliferation and neurogenesis in undifferentiated neural progenitor cells at the embryonic stage and inhibits differentiation of astrocytes. Its neurotrophic activity is exerted via MAPK1/ERK2, MAPK3/ERK1 and AKT1/AKT pathways. Neurotrophic activity is enhanced by binding to heme. Also acts as an anorexigenic neurotrophic factor that contributes to energy balance. In Rattus norvegicus (Rat), this protein is Neudesin.